The sequence spans 185 residues: Acireductone dioxygenase (185 aa).

Positions 101, 103, 107, and 145 each coordinate Fe(2+). Residues His-101, His-103, Glu-107, and His-145 each contribute to the Ni(2+) site.

Belongs to the acireductone dioxygenase (ARD) family. In terms of assembly, monomer. Fe(2+) is required as a cofactor. It depends on Ni(2+) as a cofactor.

The enzyme catalyses 1,2-dihydroxy-5-(methylsulfanyl)pent-1-en-3-one + O2 = 3-(methylsulfanyl)propanoate + CO + formate + 2 H(+). It carries out the reaction 1,2-dihydroxy-5-(methylsulfanyl)pent-1-en-3-one + O2 = 4-methylsulfanyl-2-oxobutanoate + formate + 2 H(+). Its pathway is amino-acid biosynthesis; L-methionine biosynthesis via salvage pathway; L-methionine from S-methyl-5-thio-alpha-D-ribose 1-phosphate: step 5/6. In terms of biological role, catalyzes 2 different reactions between oxygen and the acireductone 1,2-dihydroxy-3-keto-5-methylthiopentene (DHK-MTPene) depending upon the metal bound in the active site. Fe-containing acireductone dioxygenase (Fe-ARD) produces formate and 2-keto-4-methylthiobutyrate (KMTB), the alpha-ketoacid precursor of methionine in the methionine recycle pathway. Ni-containing acireductone dioxygenase (Ni-ARD) produces methylthiopropionate, carbon monoxide and formate, and does not lie on the methionine recycle pathway. This is Acireductone dioxygenase from Synechococcus sp. (strain RCC307).